A 359-amino-acid chain; its full sequence is Insulin gene enhancer protein ISL-2 (359 aa).

2 consecutive LIM zinc-binding domains span residues 25–86 and 87–149; these read AMCV…RLFG and IKCA…LLER. The disordered stretch occupies residues 151–191; sequence AAGSPRSPGPLPGARGLHLPDAGSGRQPALRPHVHKQTEKT. A phosphoserine mark is found at Ser154 and Ser157. The segment at residues 191–250 is a DNA-binding region (homeobox); it reads TTRVRTVLNEKQLHTLRTCYAANPRPDALMKEQLVEMTGLSPRVIRVWFQNKRCKDKKKS. Residues 272–301 form an LIM-binding domain (LID) region; it reads GTPLVAGSPIRHENAVQGSAVEVQTYQPPW. A Phosphoserine modification is found at Ser279. Low complexity predominate over residues 326–336; that stretch reads ESGSLGNSSGS. The segment at 326–359 is disordered; the sequence is ESGSLGNSSGSDVTSLSSQLPDTPNSMVPSPVET. Residues 337–359 show a composition bias toward polar residues; the sequence is DVTSLSSQLPDTPNSMVPSPVET.

In terms of assembly, interacts with LHX4.

The protein localises to the nucleus. Functionally, transcriptional factor that defines subclasses of motoneurons that segregate into columns in the spinal cord and select distinct axon pathways. This Homo sapiens (Human) protein is Insulin gene enhancer protein ISL-2 (ISL2).